The sequence spans 751 residues: Dual specificity tyrosine-phosphorylation-regulated kinase 1A (751 aa).

The segment covering 59–68 has biased composition (polar residues); that stretch reads YNDQIQQPLP. 2 disordered regions span residues 59–81 and 104–129; these read YNDQ…RDPA and YAKK…KVYN. A Bipartite nuclear localization signal motif is present at residues 109–126; sequence RRHQQGQGDDSSHKKERK. The Protein kinase domain maps to 151–471; the sequence is YEIDSLIGKG…PYYALQHSFF (321 aa). ATP contacts are provided by residues 157 to 165, Lys180, and 230 to 233; these read IGKGSFGQV and FEML. The active-site Proton acceptor is Asp279. Residues 477–493 show a composition bias toward polar residues; sequence EGTNTSNSVSTSPAMEQ. Disordered regions lie at residues 477 to 532, 580 to 667, and 730 to 751; these read EGTN…HSGG, HVPS…GNQA, and GMDR…VASS. The span at 494–517 shows a compositional bias: low complexity; the sequence is SQSSGTTSSTSSSSGGSSGTSNSG. Positions 585–613 are histidine-rich domain (HRD); the sequence is QQNVPHHHGNGSHHHHHHHHHHHGQHVLS. The span at 589-609 shows a compositional bias: basic residues; that stretch reads PHHHGNGSHHHHHHHHHHHGQ. Residues 611–622 show a composition bias toward polar residues; the sequence is VLSNRTRTRIYN. 2 stretches are compositionally biased toward low complexity: residues 623–633 and 642–660; these read SPSTSSSTQDS and SMTS…SSST. Polar residues predominate over residues 742-751; that stretch reads CVQQSPVASS.

Belongs to the protein kinase superfamily. CMGC Ser/Thr protein kinase family. MNB/DYRK subfamily. In terms of processing, autophosphorylated on tyrosine residues.

It localises to the nucleus. The protein resides in the nucleus speckle. It carries out the reaction L-seryl-[protein] + ATP = O-phospho-L-seryl-[protein] + ADP + H(+). The enzyme catalyses L-threonyl-[protein] + ATP = O-phospho-L-threonyl-[protein] + ADP + H(+). It catalyses the reaction L-tyrosyl-[protein] + ATP = O-phospho-L-tyrosyl-[protein] + ADP + H(+). The catalysed reaction is [DNA-directed RNA polymerase] + ATP = phospho-[DNA-directed RNA polymerase] + ADP + H(+). In terms of biological role, dual-specificity kinase which possesses both serine/threonine and tyrosine kinase activities. Exhibits a substrate preference for proline at position P+1 and arginine at position P-3. Plays an important role in double-strand breaks (DSBs) repair following DNA damage. Mechanistically, phosphorylates RNF169 and increases its ability to block accumulation of TP53BP1 at the DSB sites thereby promoting homologous recombination repair (HRR). Also acts as a positive regulator of transcription by acting as a CTD kinase that mediates phosphorylation of the CTD (C-terminal domain) of the large subunit of RNA polymerase II (RNAP II) POLR2A. Modulates alternative splicing by phosphorylating the splice factor SRSF6. Phosphorylates SEPTIN4, SEPTIN5 and SF3B1. The polypeptide is Dual specificity tyrosine-phosphorylation-regulated kinase 1A (Xenopus tropicalis (Western clawed frog)).